A 494-amino-acid polypeptide reads, in one-letter code: Alpha-amylase-related protein (494 aa).

A signal peptide spans 1 to 20 (MIKFALALTLCLAGASLSLA). The residue at position 21 (Gln21) is a Pyrrolidone carboxylic acid. An intrachain disulfide couples Cys48 to Cys104. 3 residues coordinate Ca(2+): Asn118, Gln169, and Asp178. Cys157 and Cys171 form a disulfide bridge. A chloride-binding site is contributed by Arg206. Asp208 (nucleophile) is an active-site residue. His212 contributes to the Ca(2+) binding site. The active-site Proton donor is the Glu245. Chloride contacts are provided by Asn308 and Arg343. 3 cysteine pairs are disulfide-bonded: Cys376-Cys382, Cys418-Cys441, and Cys448-Cys460.

It belongs to the glycosyl hydrolase 13 family. As to quaternary structure, monomer. Ca(2+) is required as a cofactor. The cofactor is chloride.

The protein localises to the secreted. The enzyme catalyses Endohydrolysis of (1-&gt;4)-alpha-D-glucosidic linkages in polysaccharides containing three or more (1-&gt;4)-alpha-linked D-glucose units.. This is Alpha-amylase-related protein (Amyrel) from Drosophila serrata (Fruit fly).